Consider the following 102-residue polypeptide: Small ribosomal subunit protein uS10c (102 aa).

Belongs to the universal ribosomal protein uS10 family. As to quaternary structure, part of the 30S ribosomal subunit.

It is found in the plastid. Its subcellular location is the chloroplast. In terms of biological role, involved in the binding of tRNA to the ribosomes. The sequence is that of Small ribosomal subunit protein uS10c from Guillardia theta (Cryptophyte).